The primary structure comprises 599 residues: Protein ref(2)P (599 aa).

Residues 3–88 enclose the PB1 domain; that stretch reads EKLLKITYQG…CESNMHVQVA (86 aa). The ZZ-type zinc-finger motif lies at 122–173; it reads HDSVQCDGCGLAPLIGFRYKCVQCSNFDLCQKCESAHKHPEHLMLRMPTNNG. Zn(2+) contacts are provided by C127, C130, C142, C145, C151, C154, H160, and H163. 4 disordered regions span residues 192–225, 245–319, 357–453, and 507–544; these read RRSR…HARR, TTAT…INLD, GIFA…LDPE, and ASAN…DDKR. The span at 199–211 shows a compositional bias: low complexity; that stretch reads PFQEASQPAPAAE. Residues 276-286 are compositionally biased toward basic and acidic residues; the sequence is KATESEAKPTE. Residues 291 to 319 show a composition bias toward polar residues; sequence NTDQSVPTTEDPVTTPRSTEPTTPVINLD. Low complexity predominate over residues 375-411; the sequence is QSQSSGQSAASSASQSAVPSAAPSANQSNVPSANQSA. Repeat copies occupy residues 386–393, 399–406, and 407–413. The tract at residues 386 to 413 is 3 X 8 AA repeats of S-A-N-Q-S-X-X-P; that stretch reads SASQSAVPSAAPSANQSNVPSANQSATP. A compositionally biased stretch (polar residues) spans 412-423; it reads TPSISGSISDAQ. The segment covering 511–536 has biased composition (low complexity); sequence TQTAQVDTVSTSTSTTSVTTNSVGTS. One can recognise a UBA domain in the interval 550 to 595; sequence HTDERINQSIHAMMAMGFSNEGAWLTQLLESVQGNIPAALDVMHVS.

Interacts with aPKC and Traf6.

Its subcellular location is the nucleus. It localises to the cytoplasm. In terms of biological role, required for selective autophagy activation by ubiquitinated proteins. Implicated in sigma rhabdovirus multiplication and necessary for male fertility. Involved in activating transcription of Drs. This is Protein ref(2)P (ref(2)P) from Drosophila simulans (Fruit fly).